The primary structure comprises 304 residues: UTP--glucose-1-phosphate uridylyltransferase 1 (304 aa).

The protein belongs to the UDPGP type 2 family.

It carries out the reaction alpha-D-glucose 1-phosphate + UTP + H(+) = UDP-alpha-D-glucose + diphosphate. It participates in carbohydrate metabolism; nucleotide-sugar metabolism. This chain is UTP--glucose-1-phosphate uridylyltransferase 1 (hasC1), found in Streptococcus pyogenes serotype M1.